The primary structure comprises 469 residues: uncharacterized protein (469 aa).

Over residues 152 to 161 (VREGKEEKKG) the composition is skewed to basic and acidic residues. The tract at residues 152 to 174 (VREGKEEKKGGPPGRGPPGWRRR) is disordered. Coiled-coil stretches lie at residues 346-375 (KAALEQNDRLRSELEMEVALLQSAKERSES) and 423-453 (SDITENRIKSIEHEAIQLETENMILKKKIKG).

This is an uncharacterized protein from Homo sapiens (Human).